The following is a 322-amino-acid chain: tRNA-dihydrouridine synthase B (322 aa).

Residues 16–18 (PMA) and glutamine 70 each bind FMN. Cysteine 100 functions as the Proton donor in the catalytic mechanism. FMN is bound by residues lysine 139, 200-202 (NGD), and 224-225 (GR).

The protein belongs to the Dus family. DusB subfamily. It depends on FMN as a cofactor.

It catalyses the reaction a 5,6-dihydrouridine in tRNA + NAD(+) = a uridine in tRNA + NADH + H(+). It carries out the reaction a 5,6-dihydrouridine in tRNA + NADP(+) = a uridine in tRNA + NADPH + H(+). In terms of biological role, catalyzes the synthesis of 5,6-dihydrouridine (D), a modified base found in the D-loop of most tRNAs, via the reduction of the C5-C6 double bond in target uridines. The chain is tRNA-dihydrouridine synthase B from Shewanella oneidensis (strain ATCC 700550 / JCM 31522 / CIP 106686 / LMG 19005 / NCIMB 14063 / MR-1).